Reading from the N-terminus, the 297-residue chain is N-acetylmuramic acid 6-phosphate etherase (297 aa).

In terms of domain architecture, SIS spans 56-219 (AIEAFNKGGR…STISMIGIGK (164 aa)). E84 functions as the Proton donor in the catalytic mechanism. E115 is a catalytic residue.

Belongs to the GCKR-like family. MurNAc-6-P etherase subfamily. Homodimer.

The catalysed reaction is N-acetyl-D-muramate 6-phosphate + H2O = N-acetyl-D-glucosamine 6-phosphate + (R)-lactate. It participates in amino-sugar metabolism; N-acetylmuramate degradation. Specifically catalyzes the cleavage of the D-lactyl ether substituent of MurNAc 6-phosphate, producing GlcNAc 6-phosphate and D-lactate. The polypeptide is N-acetylmuramic acid 6-phosphate etherase (Lactococcus lactis subsp. cremoris (strain SK11)).